A 214-amino-acid polypeptide reads, in one-letter code: ATP phosphoribosyltransferase (214 aa).

The protein belongs to the ATP phosphoribosyltransferase family. Short subfamily. Heteromultimer composed of HisG and HisZ subunits.

It is found in the cytoplasm. The enzyme catalyses 1-(5-phospho-beta-D-ribosyl)-ATP + diphosphate = 5-phospho-alpha-D-ribose 1-diphosphate + ATP. It participates in amino-acid biosynthesis; L-histidine biosynthesis; L-histidine from 5-phospho-alpha-D-ribose 1-diphosphate: step 1/9. In terms of biological role, catalyzes the condensation of ATP and 5-phosphoribose 1-diphosphate to form N'-(5'-phosphoribosyl)-ATP (PR-ATP). Has a crucial role in the pathway because the rate of histidine biosynthesis seems to be controlled primarily by regulation of HisG enzymatic activity. In Nostoc sp. (strain PCC 7120 / SAG 25.82 / UTEX 2576), this protein is ATP phosphoribosyltransferase (hisG).